The chain runs to 513 residues: MKALPVLLIILDGFGCRDERANNAIAQANKPNWDRLWKHHPHTLIHASESEVGLPKGQMGNSEVGHLNIGAGRVVYQEFTRIDRAIESGYFYTNPALLNAVHLARDNGKTLHVLGLLSDGGVHSHELHFHALLDLAAREGLSKVCLHVFLDGRDTPPKSAELYLRRLTDKIAQAGVGHVASMIGRYFAMDRDRRWQRVKSAYDLLTQGAAEFSAGSAQAGLEAAYARGETDEFVKATAIVPADGRPVTMEDGDSVIFLNFRSDRARQLSRPFIEPDFSEFERERTPRLATYCTLTGYSDDFDVSVAFPPERIKNGLGEYVANLGLRQLRIAETEKYPHVTFFFNGGEEVSFPGEDRILVSSPDVATYDLKPEMSAFEVTEKLLAAIGSKQYDLIVCNYANPDMVGHTGNLEAAIKAIETVDTCLGRVVEAQLARGGEVLITADHGNAELMLDAETGQAHTAHTMNLVPVIFVGRRHASLAETGALEDVSPTLLRMMGLPQPPEMSGESLLAFE.

Asp12 and Ser62 together coordinate Mn(2+). Ser62 acts as the Phosphoserine intermediate in catalysis. Residues His123, 153–154 (RD), Arg185, Arg191, 261–264 (RSDR), and Lys335 each bind substrate. Residues Asp402, His406, Asp443, His444, and His462 each coordinate Mn(2+).

Belongs to the BPG-independent phosphoglycerate mutase family. Monomer. The cofactor is Mn(2+).

It carries out the reaction (2R)-2-phosphoglycerate = (2R)-3-phosphoglycerate. Its pathway is carbohydrate degradation; glycolysis; pyruvate from D-glyceraldehyde 3-phosphate: step 3/5. Functionally, catalyzes the interconversion of 2-phosphoglycerate and 3-phosphoglycerate. The polypeptide is 2,3-bisphosphoglycerate-independent phosphoglycerate mutase (Thiobacillus denitrificans (strain ATCC 25259 / T1)).